The following is a 73-amino-acid chain: Translation initiation factor IF-1 (73 aa).

Residues 1–73 (MAKKEDTLVL…TKARVVYRHR (73 aa)) form the S1-like domain.

Belongs to the IF-1 family. In terms of assembly, component of the 30S ribosomal translation pre-initiation complex which assembles on the 30S ribosome in the order IF-2 and IF-3, IF-1 and N-formylmethionyl-tRNA(fMet); mRNA recruitment can occur at any time during PIC assembly.

It localises to the cytoplasm. In terms of biological role, one of the essential components for the initiation of protein synthesis. Stabilizes the binding of IF-2 and IF-3 on the 30S subunit to which N-formylmethionyl-tRNA(fMet) subsequently binds. Helps modulate mRNA selection, yielding the 30S pre-initiation complex (PIC). Upon addition of the 50S ribosomal subunit IF-1, IF-2 and IF-3 are released leaving the mature 70S translation initiation complex. The polypeptide is Translation initiation factor IF-1 (Chlamydia pneumoniae (Chlamydophila pneumoniae)).